A 593-amino-acid polypeptide reads, in one-letter code: Thiol:disulfide interchange protein DsbD (593 aa).

The signal sequence occupies residues 1-21; sequence MRALLTFFVAGLLVLSSPAMA. Disulfide bonds link C130–C136 and C207–C328. The next 8 membrane-spanning stretches (helical) occupy residues 193-215, 235-257, 269-291, 318-340, 347-369, 384-401, 408-425, and 440-462; these read LLFL…YPIL, LVYV…SAGL, LIGL…TLQL, GAIS…LLYV, LTGG…LVAV, RVKT…IFLL, MWST…FGWL, and SAVG…NYWF. Residues 451–593 form the Thioredoxin domain; the sequence is FASAQPALNY…FLEHIQRISN (143 aa). A disulfide bridge links C508 with C511.

The protein belongs to the thioredoxin family. DsbD subfamily.

It is found in the cell inner membrane. The catalysed reaction is [protein]-dithiol + NAD(+) = [protein]-disulfide + NADH + H(+). It catalyses the reaction [protein]-dithiol + NADP(+) = [protein]-disulfide + NADPH + H(+). Its function is as follows. Required to facilitate the formation of correct disulfide bonds in some periplasmic proteins and for the assembly of the periplasmic c-type cytochromes. Acts by transferring electrons from cytoplasmic thioredoxin to the periplasm. This transfer involves a cascade of disulfide bond formation and reduction steps. In Vibrio vulnificus (strain CMCP6), this protein is Thiol:disulfide interchange protein DsbD.